The primary structure comprises 221 residues: Holliday junction branch migration complex subunit RuvA (221 aa).

The domain I stretch occupies residues 1–61 (MQIYQFGKIV…DYTKITYGFA (61 aa)). Positions 62 to 139 (SFRERILFED…RFNENHKNQT (78 aa)) are domain II. Residues 133 to 155 (ENHKNQTEETNQDSQEKELEKKD) are disordered. Residues 140-166 (EETNQDSQEKELEKKDDLADITIQKSN) are flexible linker. The span at 146–155 (SQEKELEKKD) shows a compositional bias: basic and acidic residues. Residues 167 to 221 (LEDKTAANLEDTLKMLGFKPRQIDYALTKVEPNENFENLIENAIKIISNAREFRN) are domain III.

It belongs to the RuvA family. As to quaternary structure, homotetramer. Forms an RuvA(8)-RuvB(12)-Holliday junction (HJ) complex. HJ DNA is sandwiched between 2 RuvA tetramers; dsDNA enters through RuvA and exits via RuvB. An RuvB hexamer assembles on each DNA strand where it exits the tetramer. Each RuvB hexamer is contacted by two RuvA subunits (via domain III) on 2 adjacent RuvB subunits; this complex drives branch migration. In the full resolvosome a probable DNA-RuvA(4)-RuvB(12)-RuvC(2) complex forms which resolves the HJ.

The protein resides in the cytoplasm. Functionally, the RuvA-RuvB-RuvC complex processes Holliday junction (HJ) DNA during genetic recombination and DNA repair, while the RuvA-RuvB complex plays an important role in the rescue of blocked DNA replication forks via replication fork reversal (RFR). RuvA specifically binds to HJ cruciform DNA, conferring on it an open structure. The RuvB hexamer acts as an ATP-dependent pump, pulling dsDNA into and through the RuvAB complex. HJ branch migration allows RuvC to scan DNA until it finds its consensus sequence, where it cleaves and resolves the cruciform DNA. The chain is Holliday junction branch migration complex subunit RuvA from Mesomycoplasma hyopneumoniae (strain J / ATCC 25934 / NCTC 10110) (Mycoplasma hyopneumoniae).